A 445-amino-acid polypeptide reads, in one-letter code: Glycine--tRNA ligase (445 aa).

Residues arginine 97 and glutamate 145 each coordinate substrate. ATP contacts are provided by residues 177–179 (RNE), 187–192 (FRTCEF), 262–263 (EV), and 308–311 (GLTR). 192–196 (FEQME) is a substrate binding site. Substrate is bound at residue 304 to 308 (ETSAG).

Belongs to the class-II aminoacyl-tRNA synthetase family. In terms of assembly, homodimer.

It localises to the cytoplasm. It catalyses the reaction tRNA(Gly) + glycine + ATP = glycyl-tRNA(Gly) + AMP + diphosphate. In terms of biological role, catalyzes the attachment of glycine to tRNA(Gly). This is Glycine--tRNA ligase from Borreliella burgdorferi (strain ZS7) (Borrelia burgdorferi).